Here is a 243-residue protein sequence, read N- to C-terminus: Uridylate kinase (243 aa).

14-17 is a binding site for ATP; sequence KLSG. Glycine 57 contributes to the UMP binding site. ATP-binding residues include glycine 58 and arginine 62. Residues aspartate 77 and 139 to 146 each bind UMP; that span reads TGRPYFTT. ATP-binding residues include asparagine 167, tyrosine 173, and aspartate 176.

The protein belongs to the UMP kinase family. Homohexamer.

The protein localises to the cytoplasm. It carries out the reaction UMP + ATP = UDP + ADP. The protein operates within pyrimidine metabolism; CTP biosynthesis via de novo pathway; UDP from UMP (UMPK route): step 1/1. Its activity is regulated as follows. Inhibited by UTP. Its function is as follows. Catalyzes the reversible phosphorylation of UMP to UDP. This chain is Uridylate kinase, found in Mycoplasmopsis pulmonis (strain UAB CTIP) (Mycoplasma pulmonis).